Here is a 64-residue protein sequence, read N- to C-terminus: Large ribosomal subunit protein bL33 (64 aa).

This sequence belongs to the bacterial ribosomal protein bL33 family.

In Thermosynechococcus vestitus (strain NIES-2133 / IAM M-273 / BP-1), this protein is Large ribosomal subunit protein bL33.